Reading from the N-terminus, the 82-residue chain is Small ribosomal subunit protein uS17 (82 aa).

The protein belongs to the universal ribosomal protein uS17 family. Part of the 30S ribosomal subunit.

Functionally, one of the primary rRNA binding proteins, it binds specifically to the 5'-end of 16S ribosomal RNA. This is Small ribosomal subunit protein uS17 from Rhodopseudomonas palustris (strain BisA53).